A 431-amino-acid polypeptide reads, in one-letter code: Cleavage stimulation factor subunit 1 (431 aa).

A hydrophobic region spans residues 14–35; the sequence is LYKLIISQLLYDGYISIANGLI. WD repeat units lie at residues 106–145, 171–210, 215–254, 260–301, 303–343, and 395–430; these read SHKG…AKSA, DHVD…AKRA, QEAE…CFVS, QHTD…TTFE, AHDG…TLVR, and GHNN…RSTT.

In terms of assembly, homodimer. The CSTF complex is composed of CSTF1 (50 kDa subunit), CSTF2 (64 kDa subunit) and CSTF3 (77 kDa subunit). Interacts (via repeats WD) directly with CSTF3. Interacts (via repeat WD6) with BARD1. Interacts with ERCC6. Post-translationally, the N-terminus is blocked.

The protein localises to the nucleus. Its function is as follows. One of the multiple factors required for polyadenylation and 3'-end cleavage of mammalian pre-mRNAs. May be responsible for the interaction of CSTF with other factors to form a stable complex on the pre-mRNA. This is Cleavage stimulation factor subunit 1 (CSTF1) from Homo sapiens (Human).